Here is a 286-residue protein sequence, read N- to C-terminus: Phosphoribosylaminoimidazole-succinocarboxamide synthase (286 aa).

Belongs to the SAICAR synthetase family.

The enzyme catalyses 5-amino-1-(5-phospho-D-ribosyl)imidazole-4-carboxylate + L-aspartate + ATP = (2S)-2-[5-amino-1-(5-phospho-beta-D-ribosyl)imidazole-4-carboxamido]succinate + ADP + phosphate + 2 H(+). It functions in the pathway purine metabolism; IMP biosynthesis via de novo pathway; 5-amino-1-(5-phospho-D-ribosyl)imidazole-4-carboxamide from 5-amino-1-(5-phospho-D-ribosyl)imidazole-4-carboxylate: step 1/2. This is Phosphoribosylaminoimidazole-succinocarboxamide synthase (purC) from Pasteurella multocida (strain Pm70).